The primary structure comprises 162 residues: Ecotin (162 aa).

The N-terminal stretch at 1–18 (MFVPAVVFAALASTSAWA) is a signal peptide. The cysteines at positions 70 and 107 are disulfide-linked.

This sequence belongs to the protease inhibitor I11 (ecotin) family. In terms of assembly, homodimer.

The protein localises to the periplasm. General inhibitor of pancreatic serine proteases: inhibits chymotrypsin, trypsin, elastases, factor X, kallikrein as well as a variety of other proteases. In Salmonella choleraesuis (strain SC-B67), this protein is Ecotin.